The sequence spans 613 residues: DNA mismatch repair protein MutL (613 aa).

This sequence belongs to the DNA mismatch repair MutL/HexB family.

Functionally, this protein is involved in the repair of mismatches in DNA. It is required for dam-dependent methyl-directed DNA mismatch repair. May act as a 'molecular matchmaker', a protein that promotes the formation of a stable complex between two or more DNA-binding proteins in an ATP-dependent manner without itself being part of a final effector complex. The sequence is that of DNA mismatch repair protein MutL from Janthinobacterium sp. (strain Marseille) (Minibacterium massiliensis).